Consider the following 522-residue polypeptide: F-box-like/WD repeat-containing protein TBL1Y (522 aa).

Serine 2 bears the N-acetylserine mark. The 33-residue stretch at threonine 4–glutamine 36 folds into the LisH domain. The F-box-like domain occupies glycine 41–alanine 86. Lysine 102 is modified (N6-acetyllysine). The residue at position 130 (serine 130) is a Phosphoserine. WD repeat units follow at residues glycine 177–serine 216, proline 233–leucine 272, glutamine 274–glutamine 313, phenylalanine 316–threonine 354, glycine 357–aspartate 396, alanine 399–threonine 447, lysine 450–serine 489, and glutamine 491–aspartate 521. Lysine 287 participates in a covalent cross-link: Glycyl lysine isopeptide (Lys-Gly) (interchain with G-Cter in SUMO2).

It belongs to the WD repeat EBI family. As to quaternary structure, probable component of the N-Cor repressor complex and some E3 ubiquitin ligase complex. Interacts with NCOR2. Fetal brain and prostate. Expressed in the cochlear spiral ganglion neurons, and in outer and inner hair cells.

The protein resides in the nucleus. In terms of biological role, F-box-like protein involved in the recruitment of the ubiquitin/19S proteasome complex to nuclear receptor-regulated transcription units. Plays an essential role in transcription activation mediated by nuclear receptors. Probably acts as integral component of corepressor complexes that mediates the recruitment of the 19S proteasome complex, leading to the subsequent proteasomal degradation of transcription repressor complexes, thereby allowing cofactor exchange. The protein is F-box-like/WD repeat-containing protein TBL1Y (TBL1Y) of Homo sapiens (Human).